We begin with the raw amino-acid sequence, 280 residues long: uncharacterized protein (280 aa).

Helical transmembrane passes span 6-26 (YLVIILIIAGVISVLAFTPLV), 38-58 (VLAIVLFVYVFFGRQIIYLFP), 79-99 (IFLLDLCPFFAVIAPVFVFLK), 105-125 (GVLAVFGLFGALVTLFGELIF), 144-164 (NQIYFMMHFLSLLVSLAIILW), 171-191 (ISFFYIHVFALIYFSYVALMV), and 231-251 (LVFIVGFSLSYVAILLMTLFA).

Its subcellular location is the cell membrane. This is an uncharacterized protein from Mycoplasma genitalium (strain ATCC 33530 / DSM 19775 / NCTC 10195 / G37) (Mycoplasmoides genitalium).